We begin with the raw amino-acid sequence, 120 residues long: Large ribosomal subunit protein uL18 (120 aa).

It belongs to the universal ribosomal protein uL18 family. In terms of assembly, part of the 50S ribosomal subunit; part of the 5S rRNA/L5/L18/L25 subcomplex. Contacts the 5S and 23S rRNAs.

In terms of biological role, this is one of the proteins that bind and probably mediate the attachment of the 5S RNA into the large ribosomal subunit, where it forms part of the central protuberance. The polypeptide is Large ribosomal subunit protein uL18 (Clostridium novyi (strain NT)).